The primary structure comprises 146 residues: Multiple coagulation factor deficiency protein 2 (146 aa).

Residues 1–26 (MTMRSLLRTPFLCGLLWAFCAPGARA) form the signal peptide. One can recognise an EF-hand 1 domain in the interval 68 to 103 (SPQELQLHYFKMHDYDGNNLLDGLELSTAITHVHKE). Ca(2+) contacts are provided by Asp-81, Asp-83, Asn-85, and Glu-92. Ser-106 carries the phosphoserine modification. One can recognise an EF-hand 2 domain in the interval 116–146 (ELINIIDGVLRDDDKNNDGYIDYAEFAKSLQ). Residues Asp-129, Asn-131, Asp-133, Tyr-135, and Glu-140 each contribute to the Ca(2+) site.

Interacts in a calcium-dependent manner with LMAN1.

The protein resides in the endoplasmic reticulum-Golgi intermediate compartment. It localises to the endoplasmic reticulum. The protein localises to the golgi apparatus. Functionally, the MCFD2-LMAN1 complex forms a specific cargo receptor for the ER-to-Golgi transport of selected proteins. Plays a role in the secretion of coagulation factors. This is Multiple coagulation factor deficiency protein 2 (MCFD2) from Homo sapiens (Human).